A 298-amino-acid chain; its full sequence is 3-sulfolactaldehyde reductase (298 aa).

Residues 11-12 (QM), Asp-31, Leu-65, and Thr-96 each bind NAD(+). Arg-123 contributes to the 2,3-dihydroxypropane-1-sulfonate binding site. Lys-171 is an active-site residue. 174 to 178 (NNYMS) serves as a coordination point for 2,3-dihydroxypropane-1-sulfonate. Lys-240 provides a ligand contact to NAD(+).

The protein belongs to the HIBADH-related family. 3-sulfolactaldehyde reductase subfamily. As to quaternary structure, homotetramer. Dimer of dimers.

It catalyses the reaction (2S)-3-sulfopropanediol + NAD(+) = (2S)-3-sulfolactaldehyde + NADH + H(+). The catalysed reaction is 4-hydroxybutanoate + NAD(+) = succinate semialdehyde + NADH + H(+). Its activity is regulated as follows. Inhibited by the NADH analogs tetrahydro-NADH and hexahydro-NADH. In terms of biological role, reduces 3-sulfolactaldehyde (SLA) to 2,3-dihydroxypropane 1-sulfonate (DHPS). Metabolite profiling studies showed that the enzyme also catalyzes in vitro the NADH-dependent reduction of succinic semialdehyde (SSA) to 4-hydroxybutyrate (GHB), and that it could be involved in the metabolism of SSA, and other potentially toxic intermediates that may accumulate under stress conditions. However, the enzyme exhibits a 42,000-fold greater catalytic efficiency for the reduction of SLA over SSA. Shows no detectable activity on the analogous glycolytic intermediate glyceraldehyde-3-phosphate. The sequence is that of 3-sulfolactaldehyde reductase (yihU) from Escherichia coli (strain K12).